The following is a 503-amino-acid chain: Lysine--tRNA ligase (503 aa).

2 residues coordinate Mg(2+): Glu412 and Glu419.

This sequence belongs to the class-II aminoacyl-tRNA synthetase family. Homodimer. It depends on Mg(2+) as a cofactor.

The protein localises to the cytoplasm. The enzyme catalyses tRNA(Lys) + L-lysine + ATP = L-lysyl-tRNA(Lys) + AMP + diphosphate. This chain is Lysine--tRNA ligase, found in Idiomarina loihiensis (strain ATCC BAA-735 / DSM 15497 / L2-TR).